A 219-amino-acid polypeptide reads, in one-letter code: Thiopurine S-methyltransferase (219 aa).

Residues W10, L45, E66, and R123 each contribute to the S-adenosyl-L-methionine site.

Belongs to the class I-like SAM-binding methyltransferase superfamily. TPMT family.

Its subcellular location is the cytoplasm. It catalyses the reaction S-adenosyl-L-methionine + a thiopurine = S-adenosyl-L-homocysteine + a thiopurine S-methylether.. This Bordetella petrii (strain ATCC BAA-461 / DSM 12804 / CCUG 43448) protein is Thiopurine S-methyltransferase.